The following is a 342-amino-acid chain: Manganese-dependent ADP-ribose/CDP-alcohol diphosphatase (342 aa).

Zn(2+) contacts are provided by aspartate 18, glutamine 20, aspartate 67, asparagine 103, histidine 239, histidine 276, and histidine 278.

The protein belongs to the ADPRibase-Mn family. Monomer. The cofactor is Mg(2+).

The catalysed reaction is CDP-choline + H2O = phosphocholine + CMP + 2 H(+). It carries out the reaction ADP-D-ribose + H2O = D-ribose 5-phosphate + AMP + 2 H(+). The enzyme catalyses CDP-glycerol + H2O = sn-glycerol 3-phosphate + CMP + 2 H(+). Hydrolyzes ADP-ribose, IDP-ribose, CDP-glycerol, CDP-choline and CDP-ethanolamine, but not other non-reducing ADP-sugars or CDP-glucose. This is Manganese-dependent ADP-ribose/CDP-alcohol diphosphatase (adprm) from Xenopus tropicalis (Western clawed frog).